The primary structure comprises 155 residues: Ribosomal RNA large subunit methyltransferase H (155 aa).

Residues L72, G103, and L122–L127 each bind S-adenosyl-L-methionine.

Belongs to the RNA methyltransferase RlmH family. In terms of assembly, homodimer.

The protein resides in the cytoplasm. The catalysed reaction is pseudouridine(1915) in 23S rRNA + S-adenosyl-L-methionine = N(3)-methylpseudouridine(1915) in 23S rRNA + S-adenosyl-L-homocysteine + H(+). Specifically methylates the pseudouridine at position 1915 (m3Psi1915) in 23S rRNA. The protein is Ribosomal RNA large subunit methyltransferase H of Actinobacillus pleuropneumoniae serotype 3 (strain JL03).